We begin with the raw amino-acid sequence, 333 residues long: DNA-directed RNA polymerase subunit alpha (333 aa).

Positions 1–234 (MQISVNEFLT…QQLAAFVDLK (234 aa)) are alpha N-terminal domain (alpha-NTD). Residues 248 to 333 (IDPILLRPVD…SLKKDDKATA (86 aa)) are alpha C-terminal domain (alpha-CTD).

The protein belongs to the RNA polymerase alpha chain family. As to quaternary structure, homodimer. The RNAP catalytic core consists of 2 alpha, 1 beta, 1 beta' and 1 omega subunit. When a sigma factor is associated with the core the holoenzyme is formed, which can initiate transcription.

The catalysed reaction is RNA(n) + a ribonucleoside 5'-triphosphate = RNA(n+1) + diphosphate. In terms of biological role, DNA-dependent RNA polymerase catalyzes the transcription of DNA into RNA using the four ribonucleoside triphosphates as substrates. The polypeptide is DNA-directed RNA polymerase subunit alpha (Pseudomonas fluorescens (strain ATCC BAA-477 / NRRL B-23932 / Pf-5)).